Here is a 698-residue protein sequence, read N- to C-terminus: Elongation factor G (698 aa).

Residues 11-291 (THFRNIGIAA…AVVDYLPSPL (281 aa)) enclose the tr-type G domain. GTP-binding positions include 20–27 (AHIDAGKT), 90–94 (DTPGH), and 144–147 (NKMD).

Belongs to the TRAFAC class translation factor GTPase superfamily. Classic translation factor GTPase family. EF-G/EF-2 subfamily.

It localises to the cytoplasm. Its function is as follows. Catalyzes the GTP-dependent ribosomal translocation step during translation elongation. During this step, the ribosome changes from the pre-translocational (PRE) to the post-translocational (POST) state as the newly formed A-site-bound peptidyl-tRNA and P-site-bound deacylated tRNA move to the P and E sites, respectively. Catalyzes the coordinated movement of the two tRNA molecules, the mRNA and conformational changes in the ribosome. The chain is Elongation factor G from Deinococcus radiodurans (strain ATCC 13939 / DSM 20539 / JCM 16871 / CCUG 27074 / LMG 4051 / NBRC 15346 / NCIMB 9279 / VKM B-1422 / R1).